Consider the following 573-residue polypeptide: MKASQFFISTLKEAPADAEIVSHKLMMRAGMIKKLGAGIYNYMPIGLRVIRKVENIVREEMNRAGAVELSMPVIQPAELWQETGRWDKMGPELLRLKDRHERDFAVQPTSEEVVTDIARSEIRSYKQLPVNFYQIQTKFRDERRPRFGIMRGREFTMKDAYSFDRDTDGLRKSYENMYDAYVRIFRRFGLEFRAVAADNGAIGGSGSHEFHVIADTGEDAIVYCPTSDYAANMEAAEALPLLASRAAPAEDLVKTATPEKAKCEHVAEFLGIPLQRTVKSIVLAKDTEAGAEIWLLLIRGDHELNEVKASKVPGLADFRFATENEIVDAFGSPPGYLGPIGAKKPVKVVADRTVANMSDFVCGANYRDYHYTGVNWGRDLPEPVVADLRNVVAGDASPDGQGTLEICRGIEVGHVFMLGTRYSESMNATFLDENGKTQPMQMGCYGIGVTRILGAAIEQNFDERGIIWPAAIAPFAVVICPVGYDRSEAVKAEADRIHAELLAAGVDVILDDRGERPGVMFADWELIGVPHRVVVGDRGLKEGKVEYQGRRDAQATAVSVADVVGHVRSQLAN.

The protein belongs to the class-II aminoacyl-tRNA synthetase family. ProS type 1 subfamily. As to quaternary structure, homodimer.

It localises to the cytoplasm. It catalyses the reaction tRNA(Pro) + L-proline + ATP = L-prolyl-tRNA(Pro) + AMP + diphosphate. Catalyzes the attachment of proline to tRNA(Pro) in a two-step reaction: proline is first activated by ATP to form Pro-AMP and then transferred to the acceptor end of tRNA(Pro). As ProRS can inadvertently accommodate and process non-cognate amino acids such as alanine and cysteine, to avoid such errors it has two additional distinct editing activities against alanine. One activity is designated as 'pretransfer' editing and involves the tRNA(Pro)-independent hydrolysis of activated Ala-AMP. The other activity is designated 'posttransfer' editing and involves deacylation of mischarged Ala-tRNA(Pro). The misacylated Cys-tRNA(Pro) is not edited by ProRS. This is Proline--tRNA ligase from Cupriavidus necator (strain ATCC 17699 / DSM 428 / KCTC 22496 / NCIMB 10442 / H16 / Stanier 337) (Ralstonia eutropha).